We begin with the raw amino-acid sequence, 270 residues long: 4-hydroxy-tetrahydrodipicolinate reductase (270 aa).

Glycine 7 to methionine 12 contributes to the NAD(+) binding site. Arginine 34 is a binding site for NADP(+). NAD(+) contacts are provided by residues glycine 97–threonine 99 and serine 121–methionine 124. The active-site Proton donor/acceptor is histidine 155. Residue histidine 156 coordinates (S)-2,3,4,5-tetrahydrodipicolinate. The active-site Proton donor is lysine 159. Position 165-166 (glycine 165–threonine 166) interacts with (S)-2,3,4,5-tetrahydrodipicolinate.

This sequence belongs to the DapB family.

The protein resides in the cytoplasm. The enzyme catalyses (S)-2,3,4,5-tetrahydrodipicolinate + NAD(+) + H2O = (2S,4S)-4-hydroxy-2,3,4,5-tetrahydrodipicolinate + NADH + H(+). The catalysed reaction is (S)-2,3,4,5-tetrahydrodipicolinate + NADP(+) + H2O = (2S,4S)-4-hydroxy-2,3,4,5-tetrahydrodipicolinate + NADPH + H(+). Its pathway is amino-acid biosynthesis; L-lysine biosynthesis via DAP pathway; (S)-tetrahydrodipicolinate from L-aspartate: step 4/4. Functionally, catalyzes the conversion of 4-hydroxy-tetrahydrodipicolinate (HTPA) to tetrahydrodipicolinate. The polypeptide is 4-hydroxy-tetrahydrodipicolinate reductase (Allorhizobium ampelinum (strain ATCC BAA-846 / DSM 112012 / S4) (Agrobacterium vitis (strain S4))).